We begin with the raw amino-acid sequence, 194 residues long: 7-methyl-GTP pyrophosphatase (194 aa).

Aspartate 70 functions as the Proton acceptor in the catalytic mechanism.

Belongs to the Maf family. YceF subfamily. Requires a divalent metal cation as cofactor.

The protein localises to the cytoplasm. It catalyses the reaction N(7)-methyl-GTP + H2O = N(7)-methyl-GMP + diphosphate + H(+). In terms of biological role, nucleoside triphosphate pyrophosphatase that hydrolyzes 7-methyl-GTP (m(7)GTP). May have a dual role in cell division arrest and in preventing the incorporation of modified nucleotides into cellular nucleic acids. The sequence is that of 7-methyl-GTP pyrophosphatase from Vibrio vulnificus (strain CMCP6).